The primary structure comprises 539 residues: Cytochrome P450 monooxygenase tenB (539 aa).

The chain crosses the membrane as a helical span at residues leucine 13 to tryptophan 33. The interval proline 439–alanine 460 is disordered. Cysteine 481 is a heme binding site.

The protein belongs to the cytochrome P450 family. It depends on heme as a cofactor.

The protein resides in the membrane. It functions in the pathway secondary metabolite biosynthesis. Its function is as follows. Cytochrome P450 monooxygenase; part of the gene cluster that mediates the biosynthesis of tenellin-type 2-pyridones, iron-chelating compounds involved in iron stress tolerance, competition with the natural competitor fungus Metarhizium robertsii and insect hosts infection. TenB catalyzes the selective N-hydroxylation of the 2-pyridone nitrogen of yield tellinin and 15-hydroxytellenin (15-HT), respectively. The pathway begins with the assembly of the polyketide-amino acid backbone by the hybrid PKS-NRPS tenS with the help of the enoyl reductase tenC. These enzymes catalyze the synthesis of the pyrrolidine-2-dione intermediates pretellinin A, 11-hydropretellenin A, 12-hydropretellenin A, 13-hydropretellenin A, 14-hydropretellenin A, 12-oxopretellenin A and prototellinin D. The cytochrome P450 monooxygenase tenA then catalyzes an oxidative ring expansion of pretenellin A and 14-hydropretellenin A to form the 2-pyridone core, leading to pretenellin B and pyridovericin, respectively. The cytochrome P450 monooxygenase tenB is then required for the selective N-hydroxylation of the 2-pyridone nitrogen of yield tellinin and 15-hydroxytellenin (15-HT), respectively. The UDP-glucosyltransferase GT1 and the methyltransferase MT1, located outside the tenS gene cluster, contribute to the stepwise glycosylation and methylation of 15-HT to obtain the glycoside pyridovericin-N-O-(4-O-methyl-beta-D-glucopyranoside) (PMGP). Additional related compounds such as 1-O-methyl-15-HT, (8Z)-1-O-methyl-15-HT, and O-methyltenellin A are also produced but the enzymes involved in their biosynthesis have still to be determined. This Beauveria bassiana (White muscardine disease fungus) protein is Cytochrome P450 monooxygenase tenB.